Reading from the N-terminus, the 232-residue chain is Golgi SNAP receptor complex member 1 (232 aa).

At 1–211 (MGGSSYDVLR…QRINIKKRRD (211 aa)) the chain is on the cytoplasmic side. Coiled-coil stretches lie at residues 6 to 23 (YDVLRKQARSLENEIDLK) and 52 to 80 (GEHVFDSLSEEIEQMLEKLSSLNESMSDL). The helical; Anchor for type IV membrane protein transmembrane segment at 212-232 (SLILGAVIGFCVILLLLYAFN) threads the bilayer.

Belongs to the GOSR1 family. In terms of assembly, component of several multiprotein Golgi SNARE complexes.

It is found in the golgi apparatus membrane. Involved in transport from the ER to the Golgi apparatus as well as in intra-Golgi transport. It belongs to a super-family of proteins called t-SNAREs or soluble NSF (N-ethylmaleimide-sensitive factor) attachment protein receptor. This Drosophila melanogaster (Fruit fly) protein is Golgi SNAP receptor complex member 1 (Gos28).